The chain runs to 1499 residues: Rho GTPase-activating protein 35 (1499 aa).

The has GTPase activity, required for proper localization stretch occupies residues 1–266 (MMMARKQDVR…IPYFEALKQQ (266 aa)). GTP is bound by residues lysine 28, 33-37 (IGKSC), leucine 52, serine 56, 95-97 (EQT), 201-203 (KCD), and 229-231 (SAR). FF domains lie at 270 to 327 (IATA…HIHR), 368 to 422 (KLLE…HLEK), 429 to 483 (RAEM…HQKQ), and 485 to 550 (IDRA…HIHF). Tyrosine 308 is subject to Phosphotyrosine. Phosphoserine is present on serine 589. The region spanning 592–767 (DLNIDRINLV…LLDSKRNLNL (176 aa)) is the pG1 pseudoGTPase domain. 2 positions are modified to phosphoserine: serine 770 and serine 773. The 165-residue stretch at 783–947 (RIVMCLMCGD…FKDVVEKKNI (165 aa)) folds into the pG2 pseudoGTPase domain. 4 positions are modified to phosphoserine: serine 970, serine 975, serine 985, and serine 1072. Phosphotyrosine is present on tyrosine 1087. A Phosphotyrosine; by ABL2 and PTK6 modification is found at tyrosine 1105. Residues 1124 to 1141 (KAQSNGSGNGSDSEMDTS) show a composition bias toward polar residues. Residues 1124-1148 (KAQSNGSGNGSDSEMDTSSLERGRK) are disordered. A phosphoserine mark is found at serine 1134, serine 1142, serine 1150, serine 1176, serine 1179, and serine 1221. The tract at residues 1177–1207 (VGSDDELGPIRKKEEDQASQGYKGDNAVIPY) is disordered. Positions 1213-1236 (PRRRNILRSLRRNTKKPKPKPRPS) are required for phospholipid binding and regulation of the substrate preference. Position 1226 is a phosphothreonine (threonine 1226). Phosphoserine is present on serine 1236. A Rho-GAP domain is found at 1249 to 1436 (VPLTTVVTPE…LFIQQCPFFF (188 aa)). Residues 1446–1499 (GAAPGSPSAMAPTVPFLTSTPATSQPSPPQSPPPTPQSPMQPLLSSQLQAEHTL) form a disordered region. Low complexity predominate over residues 1448–1470 (APGSPSAMAPTVPFLTSTPATSQ). The span at 1471–1484 (PSPPQSPPPTPQSP) shows a compositional bias: pro residues. Serine 1472 and serine 1476 each carry phosphoserine. Threonine 1480 carries the post-translational modification Phosphothreonine. Serine 1483 is subject to Phosphoserine. Over residues 1485–1499 (MQPLLSSQLQAEHTL) the composition is skewed to low complexity.

As to quaternary structure, interacts with the general transcription factor GTF2I, the interaction sequesters GTF2I in the cytoplasm. Interacts with RASA1. Phosphorylation of Tyr-1105 by PTK6 promotes the association with RASA1, inactivating RHOA while activating RAS. Phosphorylation at Tyr-308 by PDGFRA inhibits binding to GTF2I. Phosphorylated by PRKCA at Ser-1221 and Thr-1226, induces relocalization from the cytoplasm to regions of plasma membrane ruffling and prevents the binding and substrate specificity regulation by phospholipids. In brain, phosphorylated by FYN and SRC. During focal adhesion formation, phosphorylated by MAPK1 and MAPK3 at the C-terminal region, probably at Ser-1451, Ser-1476, Thr-1480 and Ser-1483. Phosphorylation by MAPK1 and MAPK3 inhibits GAP function and localizes ARGHAP35 away from newly forming focal adhesions and stress fibers in cells spreading on fibronectin. Phosphorylation at Ser-1476 and Thr-1480 by GSK3B requires priming by MAPK and inhibits RhoGAP activity and modulates polarized cell migration. In terms of tissue distribution, expressed in the developing kidneys. Expressed in all regions of the mature nervous system (at protein level). Detected in neutrophils (at protein level).

The protein localises to the cytoplasm. Its subcellular location is the cytoskeleton. The protein resides in the cilium basal body. It localises to the nucleus. It is found in the cell membrane. Its function is as follows. Rho GTPase-activating protein (GAP). Binds several acidic phospholipids which inhibits the Rho GAP activity to promote the Rac GAP activity. This binding is inhibited by phosphorylation by PRKCA. Involved in cell differentiation as well as cell adhesion and migration, plays an important role in retinal tissue morphogenesis, neural tube fusion, midline fusion of the cerebral hemispheres and mammary gland branching morphogenesis. Transduces signals from p21-ras to the nucleus, acting via the ras GTPase-activating protein (GAP). Transduces SRC-dependent signals from cell-surface adhesion molecules, such as laminin, to promote neurite outgrowth. Regulates axon outgrowth, guidance and fasciculation. Modulates Rho GTPase-dependent F-actin polymerization, organization and assembly, is involved in polarized cell migration and in the positive regulation of ciliogenesis and cilia elongation. During mammary gland development, is required in both the epithelial and stromal compartments for ductal outgrowth. Represses transcription of the glucocorticoid receptor by binding to the cis-acting regulatory sequence 5'-GAGAAAAGAAACTGGAGAAACTC-3'; this function is however unclear and would need additional experimental evidences. The sequence is that of Rho GTPase-activating protein 35 from Mus musculus (Mouse).